We begin with the raw amino-acid sequence, 259 residues long: GTP cyclohydrolase FolE2 (259 aa).

It belongs to the GTP cyclohydrolase IV family.

The catalysed reaction is GTP + H2O = 7,8-dihydroneopterin 3'-triphosphate + formate + H(+). It participates in cofactor biosynthesis; 7,8-dihydroneopterin triphosphate biosynthesis; 7,8-dihydroneopterin triphosphate from GTP: step 1/1. Functionally, converts GTP to 7,8-dihydroneopterin triphosphate. In Thermotoga petrophila (strain ATCC BAA-488 / DSM 13995 / JCM 10881 / RKU-1), this protein is GTP cyclohydrolase FolE2.